The primary structure comprises 691 residues: Methionine--tRNA ligase (691 aa).

The short motif at 15-25 (PYTNGPIHIGH) is the 'HIGH' region element. Zn(2+) contacts are provided by Cys147, Cys150, Cys160, and Cys163. The short motif at 336–340 (KLSTS) is the 'KMSKS' region element. Thr339 contributes to the ATP binding site. The tRNA-binding domain maps to 589–691 (DFTKMDLRVG…DGVKAGTTIN (103 aa)).

This sequence belongs to the class-I aminoacyl-tRNA synthetase family. MetG type 1 subfamily. In terms of assembly, homodimer. Requires Zn(2+) as cofactor.

It localises to the cytoplasm. It catalyses the reaction tRNA(Met) + L-methionine + ATP = L-methionyl-tRNA(Met) + AMP + diphosphate. Functionally, is required not only for elongation of protein synthesis but also for the initiation of all mRNA translation through initiator tRNA(fMet) aminoacylation. The protein is Methionine--tRNA ligase of Christiangramia forsetii (strain DSM 17595 / CGMCC 1.15422 / KT0803) (Gramella forsetii).